Consider the following 123-residue polypeptide: Small ribosomal subunit protein uS12 (123 aa).

The interval 1 to 32 (MPTIQQLVRKGRKDKKAKVKTAALKGSPQRRG) is disordered. The segment covering 9-19 (RKGRKDKKAKV) has biased composition (basic residues). At D89 the chain carries 3-methylthioaspartic acid.

It belongs to the universal ribosomal protein uS12 family. In terms of assembly, part of the 30S ribosomal subunit. Contacts proteins S8 and S17. May interact with IF1 in the 30S initiation complex.

In terms of biological role, with S4 and S5 plays an important role in translational accuracy. Its function is as follows. Interacts with and stabilizes bases of the 16S rRNA that are involved in tRNA selection in the A site and with the mRNA backbone. Located at the interface of the 30S and 50S subunits, it traverses the body of the 30S subunit contacting proteins on the other side and probably holding the rRNA structure together. The combined cluster of proteins S8, S12 and S17 appears to hold together the shoulder and platform of the 30S subunit. The sequence is that of Small ribosomal subunit protein uS12 from Corynebacterium kroppenstedtii (strain DSM 44385 / JCM 11950 / CIP 105744 / CCUG 35717).